Consider the following 241-residue polypeptide: Small ribosomal subunit protein uS2 (241 aa).

Belongs to the universal ribosomal protein uS2 family.

In Proteus mirabilis (strain HI4320), this protein is Small ribosomal subunit protein uS2.